The chain runs to 104 residues: Large ribosomal subunit protein bL21 (104 aa).

It belongs to the bacterial ribosomal protein bL21 family. Part of the 50S ribosomal subunit. Contacts protein L20.

This protein binds to 23S rRNA in the presence of protein L20. The polypeptide is Large ribosomal subunit protein bL21 (Opitutus terrae (strain DSM 11246 / JCM 15787 / PB90-1)).